The primary structure comprises 1371 residues: DNA-directed RNA polymerase subunit beta (1371 aa).

It belongs to the RNA polymerase beta chain family. As to quaternary structure, the RNAP catalytic core consists of 2 alpha, 1 beta, 1 beta' and 1 omega subunit. When a sigma factor is associated with the core the holoenzyme is formed, which can initiate transcription.

The catalysed reaction is RNA(n) + a ribonucleoside 5'-triphosphate = RNA(n+1) + diphosphate. DNA-dependent RNA polymerase catalyzes the transcription of DNA into RNA using the four ribonucleoside triphosphates as substrates. The protein is DNA-directed RNA polymerase subunit beta of Citrifermentans bemidjiense (strain ATCC BAA-1014 / DSM 16622 / JCM 12645 / Bem) (Geobacter bemidjiensis).